The primary structure comprises 984 residues: Rhoptry neck protein 4 (984 aa).

Residues 1–26 (MAIKNTLTGSGLLVLLTLACGTTVQS) form the signal peptide. Positions 24 to 300 (VQSSPPTPAP…TPIPASKGIY (277 aa)) are disordered. Polar residues-rich tracts occupy residues 66–85 (PQKT…NSKV) and 92–105 (SDTT…TSES). Asn81 carries N-linked (GlcNAc...) asparagine glycosylation. Over residues 106–117 (PPVPQLGTPPRP) the composition is skewed to pro residues. Copy 1 of the repeat occupies 129–172 (QPPTAAPRTSRSVDTGSGSDASTEQQAGGQKVVTPIPASKGIYP). Polar residues predominate over residues 135 to 156 (PRTSRSVDTGSGSDASTEQQAG). Basic residues predominate over residues 214-228 (TGRRRAKARNRKRHP). Residues 242–285 (QPPTTASRPSNGEGESQPPTAAPRTSRSVDTGSGSDASTEQQAG) show a composition bias toward polar residues. The stretch at 258–301 (QPPTAAPRTSRSVDTGSGSDASTEQQAGGQKVVTPIPASKGIYP) is repeat 2. Asn390 and Asn780 each carry an N-linked (GlcNAc...) asparagine glycan. The segment at 882-984 (GPTVSDESRR…EESTSKTSEL (103 aa)) is disordered. A compositionally biased stretch (basic residues) spans 892–901 (MIHPVRHRSR). Residues 902-914 (TAPSSEAASTAAE) are compositionally biased toward low complexity. Residue Asn925 is glycosylated (N-linked (GlcNAc...) asparagine). Residues 967–984 (LKQSDTLIEESTSKTSEL) show a composition bias toward polar residues.

The protein localises to the secreted. The protein resides in the parasitophorous vacuole membrane. This chain is Rhoptry neck protein 4 (RON4), found in Toxoplasma gondii.